We begin with the raw amino-acid sequence, 226 residues long: Triosephosphate isomerase (226 aa).

His-91 acts as the Electrophile in catalysis. Glu-163 serves as the catalytic Proton acceptor. Positions 169 and 207 each coordinate substrate.

This sequence belongs to the triosephosphate isomerase family. In terms of assembly, homodimer.

It is found in the cytoplasm. The catalysed reaction is D-glyceraldehyde 3-phosphate = dihydroxyacetone phosphate. It functions in the pathway carbohydrate biosynthesis; gluconeogenesis. The protein operates within carbohydrate degradation; glycolysis; D-glyceraldehyde 3-phosphate from glycerone phosphate: step 1/1. Functionally, involved in the gluconeogenesis. Catalyzes stereospecifically the conversion of dihydroxyacetone phosphate (DHAP) to D-glyceraldehyde-3-phosphate (G3P). The chain is Triosephosphate isomerase from Rhizobium etli (strain ATCC 51251 / DSM 11541 / JCM 21823 / NBRC 15573 / CFN 42).